The following is a 362-amino-acid chain: Epoxyqueuosine reductase (362 aa).

The active-site Proton donor is the Asp-143. One can recognise a 4Fe-4S ferredoxin-type domain in the interval 191 to 220 (PDSPKHQDSCGKCQACIKLCPTGAIQPGKM). [4Fe-4S] cluster-binding residues include Cys-200, Cys-203, Cys-206, Cys-210, Cys-226, Cys-253, Cys-256, and Cys-260.

It belongs to the QueG family. In terms of assembly, monomer. Cob(II)alamin is required as a cofactor. It depends on [4Fe-4S] cluster as a cofactor.

The protein localises to the cytoplasm. It catalyses the reaction epoxyqueuosine(34) in tRNA + AH2 = queuosine(34) in tRNA + A + H2O. The protein operates within tRNA modification; tRNA-queuosine biosynthesis. Functionally, catalyzes the conversion of epoxyqueuosine (oQ) to queuosine (Q), which is a hypermodified base found in the wobble positions of tRNA(Asp), tRNA(Asn), tRNA(His) and tRNA(Tyr). In Francisella cf. novicida (strain Fx1), this protein is Epoxyqueuosine reductase.